The primary structure comprises 402 residues: Palmitoyltransferase PFA4 (402 aa).

Over 1–8 (MAVQLKWP) the chain is Cytoplasmic. A helical membrane pass occupies residues 9 to 29 (IIGVVIPCVLIAMVAYGSHYF). Over 30–39 (VFRTNLSRTE) the chain is Lumenal. A helical transmembrane segment spans residues 40 to 60 (QILYEVYVCIVWLSYYLAIVV). Topologically, residues 61–125 (DPGSPPKNFT…GHNNLPHFLR (65 aa)) are cytoplasmic. The region spanning 78–128 (RWCKKCQNYKPERSHHCKTCNKCVLKMDHHCPWTYNCVGHNNLPHFLRFVF) is the DHHC domain. Cys-108 (S-palmitoyl cysteine intermediate) is an active-site residue. Residues 126 to 146 (FVFFLIVGMTYVLFQLGKQVL) traverse the membrane as a helical segment. Residues 147–165 (HYYDSSKLPSYLIDKKEMC) are Lumenal-facing. A helical transmembrane segment spans residues 166–186 (AVIFLLPVTFFVFVSIIILFV). At 187–402 (RCMINLLFRG…LVSKDEISNN (216 aa)) the chain is on the cytoplasmic side.

Belongs to the DHHC palmitoyltransferase family. PFA4 subfamily.

Its subcellular location is the endoplasmic reticulum membrane. The enzyme catalyses L-cysteinyl-[protein] + hexadecanoyl-CoA = S-hexadecanoyl-L-cysteinyl-[protein] + CoA. Mediates the reversible addition of palmitate to target proteins, thereby regulating their membrane association and biological function. The polypeptide is Palmitoyltransferase PFA4 (Debaryomyces hansenii (strain ATCC 36239 / CBS 767 / BCRC 21394 / JCM 1990 / NBRC 0083 / IGC 2968) (Yeast)).